A 161-amino-acid polypeptide reads, in one-letter code: Nucleotide-binding protein H16_A3060 (161 aa).

The protein belongs to the YajQ family.

Nucleotide-binding protein. The protein is Nucleotide-binding protein H16_A3060 of Cupriavidus necator (strain ATCC 17699 / DSM 428 / KCTC 22496 / NCIMB 10442 / H16 / Stanier 337) (Ralstonia eutropha).